We begin with the raw amino-acid sequence, 335 residues long: Ketol-acid reductoisomerase (NADP(+)) (335 aa).

Residues 5 to 185 (SKIYTDKDSN…GATRAGVIPT (181 aa)) form the KARI N-terminal Rossmann domain. NADP(+)-binding positions include 28 to 31 (YGSQ), Ser-56, and 86 to 89 (DMVQ). Residue His-111 is part of the active site. Gly-137 contacts NADP(+). One can recognise a KARI C-terminal knotted domain in the interval 186–331 (TFKEETETDL…NQLKDLIQKG (146 aa)). Mg(2+)-binding residues include Asp-194, Glu-198, Glu-230, and Glu-234. Ser-255 serves as a coordination point for substrate.

The protein belongs to the ketol-acid reductoisomerase family. Mg(2+) is required as a cofactor.

The enzyme catalyses (2R)-2,3-dihydroxy-3-methylbutanoate + NADP(+) = (2S)-2-acetolactate + NADPH + H(+). It carries out the reaction (2R,3R)-2,3-dihydroxy-3-methylpentanoate + NADP(+) = (S)-2-ethyl-2-hydroxy-3-oxobutanoate + NADPH + H(+). It functions in the pathway amino-acid biosynthesis; L-isoleucine biosynthesis; L-isoleucine from 2-oxobutanoate: step 2/4. The protein operates within amino-acid biosynthesis; L-valine biosynthesis; L-valine from pyruvate: step 2/4. Functionally, involved in the biosynthesis of branched-chain amino acids (BCAA). Catalyzes an alkyl-migration followed by a ketol-acid reduction of (S)-2-acetolactate (S2AL) to yield (R)-2,3-dihydroxy-isovalerate. In the isomerase reaction, S2AL is rearranged via a Mg-dependent methyl migration to produce 3-hydroxy-3-methyl-2-ketobutyrate (HMKB). In the reductase reaction, this 2-ketoacid undergoes a metal-dependent reduction by NADPH to yield (R)-2,3-dihydroxy-isovalerate. This Saccharolobus islandicus (strain Y.G.57.14 / Yellowstone #1) (Sulfolobus islandicus) protein is Ketol-acid reductoisomerase (NADP(+)).